The sequence spans 487 residues: Malonate-semialdehyde dehydrogenase 3 (487 aa).

The NAD(+) site is built by F154, K178, E181, R182, and S231. C286 serves as the catalytic Nucleophile. E386 is a binding site for NAD(+).

It belongs to the aldehyde dehydrogenase family. IolA subfamily. In terms of assembly, homotetramer.

It catalyses the reaction 3-oxopropanoate + NAD(+) + CoA + H2O = hydrogencarbonate + acetyl-CoA + NADH + H(+). It carries out the reaction 2-methyl-3-oxopropanoate + NAD(+) + CoA + H2O = propanoyl-CoA + hydrogencarbonate + NADH + H(+). Its pathway is polyol metabolism; myo-inositol degradation into acetyl-CoA; acetyl-CoA from myo-inositol: step 7/7. Functionally, catalyzes the oxidation of malonate semialdehyde (MSA) and methylmalonate semialdehyde (MMSA) into acetyl-CoA and propanoyl-CoA, respectively. Is involved in a myo-inositol catabolic pathway. Bicarbonate, and not CO2, is the end-product of the enzymatic reaction. This Bacillus cereus (strain ZK / E33L) protein is Malonate-semialdehyde dehydrogenase 3.